The following is a 238-amino-acid chain: Purine nucleoside phosphorylase DeoD-type (238 aa).

His4 is a binding site for a purine D-ribonucleoside. Phosphate is bound by residues Gly20, Arg24, Arg43, and 87 to 90 (RVGS). A purine D-ribonucleoside is bound by residues 179–181 (EME) and 203–204 (SD). Residue Asp204 is the Proton donor of the active site.

It belongs to the PNP/UDP phosphorylase family. In terms of assembly, homohexamer; trimer of homodimers.

The catalysed reaction is a purine D-ribonucleoside + phosphate = a purine nucleobase + alpha-D-ribose 1-phosphate. It carries out the reaction a purine 2'-deoxy-D-ribonucleoside + phosphate = a purine nucleobase + 2-deoxy-alpha-D-ribose 1-phosphate. Its function is as follows. Catalyzes the reversible phosphorolytic breakdown of the N-glycosidic bond in the beta-(deoxy)ribonucleoside molecules, with the formation of the corresponding free purine bases and pentose-1-phosphate. In Haemophilus influenzae (strain 86-028NP), this protein is Purine nucleoside phosphorylase DeoD-type.